The sequence spans 393 residues: DNA/RNA-binding protein KIN17 (393 aa).

A C2H2-type zinc finger spans residues 28 to 50 (CQMCQKQCRDENGFKCHCMSESH). Residues 51 to 160 (QRQLLLASEN…RQLELEKKKK (110 aa)) are winged helix-turn-helix (wHTH). Lys-135 bears the N6,N6,N6-trimethyllysine; by METTL22; in vitro mark. At Lys-135 the chain carries N6-methyllysine. Residues 147–180 (ETIRRQLELEKKKKQDLDDEEKTAKFIEEQVRRG) are a coiled coil. Residues 209 to 224 (KGACSSSGATSSKSST) are compositionally biased toward low complexity. A disordered region spans residues 209 to 260 (KGACSSSGATSSKSSTLGPSALKTIGSSASVKRKESSQSSTQSKEKKKKKSA). The stretch at 250-277 (QSKEKKKKKSALDEIMEIEEEKKRTART) forms a coiled coil. A C-terminal subdomain A region spans residues 284 to 334 (EIIVKIITKKLGEKYHKKKAIVKEVIDKYTAVVKMIDSGDKLKLDQTHLET). Residues 340–391 (GKRILVLNGGYRGNEGTLESINEKTFSATIVIETGPLKGRRVEGIQYEDISK) are C-terminal subdomain B.

This sequence belongs to the KIN17 family. In terms of assembly, associated with DNA polymerase alpha, RFC1 and cyclin A, in multiprotein DNA replication complexes. Also associates with replication origins at the G1/S phase boundary and throughout the S phase in vivo. (Microbial infection) Interacts with SV40 large T antigen. In terms of tissue distribution, ubiquitously expressed in all tissues examined, with highest levels in skeletal muscle, heart and testis. Differentially expressed in non-tumorigenic and tumorigenic cell lines. Highly expressed in proliferating epithelial keratinocyte cells in vitro (at protein level).

It is found in the nucleus. Its subcellular location is the cytoplasm. In terms of biological role, involved in DNA replication and the cellular response to DNA damage. May participate in DNA replication factories and create a bridge between DNA replication and repair mediated by high molecular weight complexes. May play a role in illegitimate recombination and regulation of gene expression. May participate in mRNA processing. Binds, in vitro, to double-stranded DNA. Also shown to bind preferentially to curved DNA in vitro and in vivo. Binds via its C-terminal domain to RNA in vitro. The protein is DNA/RNA-binding protein KIN17 of Homo sapiens (Human).